The sequence spans 267 residues: Phosphatidylglycerol--prolipoprotein diacylglyceryl transferase (267 aa).

Transmembrane regions (helical) follow at residues 10-30, 54-74, 90-110, and 116-136; these read VAIALGPFKVHWYGLMYVVGF, LLFYGALGVVLGGRVGYALFY, WDGGMSFHGGLIGVLIAAWLF, and LAFFQLTDFVAPLVPLGLGAG. Arg137 contributes to the a 1,2-diacyl-sn-glycero-3-phospho-(1'-sn-glycerol) binding site. 3 helical membrane passes run 169 to 189, 197 to 217, and 231 to 251; these read PSPLYEFALEGVVMFVVLWWV, GMISGLFLLLYAVFRFSVEFV, and WLTMGQLLTVPMALAGIALCV.

It belongs to the Lgt family.

It localises to the cell inner membrane. The catalysed reaction is L-cysteinyl-[prolipoprotein] + a 1,2-diacyl-sn-glycero-3-phospho-(1'-sn-glycerol) = an S-1,2-diacyl-sn-glyceryl-L-cysteinyl-[prolipoprotein] + sn-glycerol 1-phosphate + H(+). The protein operates within protein modification; lipoprotein biosynthesis (diacylglyceryl transfer). Functionally, catalyzes the transfer of the diacylglyceryl group from phosphatidylglycerol to the sulfhydryl group of the N-terminal cysteine of a prolipoprotein, the first step in the formation of mature lipoproteins. The protein is Phosphatidylglycerol--prolipoprotein diacylglyceryl transferase of Chromohalobacter salexigens (strain ATCC BAA-138 / DSM 3043 / CIP 106854 / NCIMB 13768 / 1H11).